Here is a 339-residue protein sequence, read N- to C-terminus: Probable E3 ubiquitin-protein ligase BAH1-like 1 (339 aa).

The 163-residue stretch at 1–163 (MKFGAIYEEY…GSVSGRDFKS (163 aa)) folds into the SPX domain. The segment at 235-284 (CPICLDTLFNPYALSCGHLFCKGCACGAASVYIFQGVKSAPPEAKCPVCR) adopts an RING-type zinc-finger fold.

It belongs to the RING-type zinc finger family.

It catalyses the reaction S-ubiquitinyl-[E2 ubiquitin-conjugating enzyme]-L-cysteine + [acceptor protein]-L-lysine = [E2 ubiquitin-conjugating enzyme]-L-cysteine + N(6)-ubiquitinyl-[acceptor protein]-L-lysine.. Its pathway is protein modification; protein ubiquitination. The sequence is that of Probable E3 ubiquitin-protein ligase BAH1-like 1 from Oryza sativa subsp. indica (Rice).